A 186-amino-acid polypeptide reads, in one-letter code: Elongation factor P (186 aa).

The protein belongs to the elongation factor P family.

The protein localises to the cytoplasm. It participates in protein biosynthesis; polypeptide chain elongation. In terms of biological role, involved in peptide bond synthesis. Stimulates efficient translation and peptide-bond synthesis on native or reconstituted 70S ribosomes in vitro. Probably functions indirectly by altering the affinity of the ribosome for aminoacyl-tRNA, thus increasing their reactivity as acceptors for peptidyl transferase. This is Elongation factor P from Clostridium acetobutylicum (strain ATCC 824 / DSM 792 / JCM 1419 / IAM 19013 / LMG 5710 / NBRC 13948 / NRRL B-527 / VKM B-1787 / 2291 / W).